The primary structure comprises 100 residues: Colipase-like protein 2 (100 aa).

The first 21 residues, 1–21, serve as a signal peptide directing secretion; that stretch reads MAAALALVAGVLSGAVLPLWS. 5 disulfide bridges follow: Cys-34/Cys-45, Cys-40/Cys-56, Cys-44/Cys-78, Cys-66/Cys-86, and Cys-80/Cys-97.

It belongs to the colipase family.

The protein localises to the secreted. This is Colipase-like protein 2 (CLPSL2) from Homo sapiens (Human).